The chain runs to 355 residues: MSTFAIPRSVEWHETHVTILNQQKLPSVTEYLDLHTLEDVHDAIVTLKVRGAPAIGITAAYGLALAASRYETESVDEFQRRLKQDRDYLASARPTAVNLFWALDRLVAAAKSAASVNEAKTTLVHEAIRIQIEDEDVCRRIGEHALSLFHRGDRIMTICNAGSIATARYGTALAPFYLAKEKGIELSVYALETRPVLQGARLTAWELMQAGVDVTLITDNMAAQTIKAKNINAIIVGADRIAQNGDTANKIGTFGLALLAQSFGIPFYVAAPLSTIDLATKTGADIPIEERHPDEVTHLNGVRIAPEGVNVYNPAFDVTPNELITAIITEKGIVYGDYETELPSLVAKEEHHETA.

Residues 50–52, Arg-93, and Gln-198 contribute to the substrate site; that span reads RGA. Residue Asp-239 is the Proton donor of the active site. 249 to 250 provides a ligand contact to substrate; the sequence is NK.

The protein belongs to the eIF-2B alpha/beta/delta subunits family. MtnA subfamily. In terms of assembly, homodimer.

The catalysed reaction is 5-(methylsulfanyl)-alpha-D-ribose 1-phosphate = 5-(methylsulfanyl)-D-ribulose 1-phosphate. The protein operates within amino-acid biosynthesis; L-methionine biosynthesis via salvage pathway; L-methionine from S-methyl-5-thio-alpha-D-ribose 1-phosphate: step 1/6. Functionally, catalyzes the interconversion of methylthioribose-1-phosphate (MTR-1-P) into methylthioribulose-1-phosphate (MTRu-1-P). This chain is Methylthioribose-1-phosphate isomerase, found in Geobacillus thermodenitrificans (strain NG80-2).